The sequence spans 842 residues: Taste receptor type 1 member 1 (842 aa).

The N-terminal stretch at 1–19 (MLFWAAHLLLSLQLAVAYC) is a signal peptide. The Extracellular portion of the chain corresponds to 20–568 (WAFSCQRTES…EFLGWHEPIS (549 aa)). N-linked (GlcNAc...) asparagine glycosylation is found at N88, N89, N96, N136, N292, N480, and N530. Residues 569 to 589 (LVLLAANTLLLLLLIGTAGLF) traverse the membrane as a helical segment. At 590-604 (AWRLHTPVVRSAGGR) the chain is on the cytoplasmic side. The chain crosses the membrane as a helical span at residues 605–625 (LCFLMLGSLVAGSCSLYSFFG). Residues 626–640 (KPTVPACLLRQPLFS) are Extracellular-facing. A helical membrane pass occupies residues 641 to 661 (LGFAIFLSCLTIRSFQLVIIF). Residues 662 to 681 (KFSTKVPTFYHTWAQNHGAG) are Cytoplasmic-facing. The chain crosses the membrane as a helical span at residues 682–702 (IFVIVSSTVHLFLCLTWLAMW). Topologically, residues 703–725 (TPRPTREYQRFPHLVILECTEVN) are extracellular. Residues 726–746 (SVGFLVAFAHNILLSISTFVC) traverse the membrane as a helical segment. The Cytoplasmic segment spans residues 747–762 (SYLGKELPENYNEAKC). The helical transmembrane segment at 763–783 (VTFSLLLHFVSWIAFFTMSSI) threads the bilayer. At 784–789 (YQGSYL) the chain is on the extracellular side. A helical membrane pass occupies residues 790-810 (PAVNVLAGLATLSGGFSGYFL). The Cytoplasmic portion of the chain corresponds to 811–842 (PKCYVILCRPELNNTEHFQASIQDYTRRCGTT).

The protein belongs to the G-protein coupled receptor 3 family. TAS1R subfamily. In terms of assembly, forms heterodimers with TAS1R3. As to expression, expressed strongly only in fungiform papillae.

It localises to the cell membrane. In terms of biological role, putative taste receptor. TAS1R1/TAS1R3 responds to the umami taste stimulus (the taste of monosodium glutamate) and also to most of the 20 standard L-amino acids, but not to their D-enantiomers or other compounds. Sequence differences within and between species can significantly influence the selectivity and specificity of taste responses. This chain is Taste receptor type 1 member 1 (Tas1r1), found in Mus musculus (Mouse).